A 199-amino-acid chain; its full sequence is Recombination protein RecR (199 aa).

The segment at 58–73 (CSACGNVDTQDPCAIC) adopts a C4-type zinc-finger fold. The 96-residue stretch at 81 to 176 (HILCIVEEVG…SVSRLAHGVP (96 aa)) folds into the Toprim domain.

This sequence belongs to the RecR family.

In terms of biological role, may play a role in DNA repair. It seems to be involved in an RecBC-independent recombinational process of DNA repair. It may act with RecF and RecO. The chain is Recombination protein RecR from Parvibaculum lavamentivorans (strain DS-1 / DSM 13023 / NCIMB 13966).